The chain runs to 393 residues: Formate-dependent phosphoribosylglycinamide formyltransferase (393 aa).

N(1)-(5-phospho-beta-D-ribosyl)glycinamide contacts are provided by residues 22–23 and Glu-82; that span reads EL. Residues Arg-114, Lys-155, 160-165, 195-198, and Glu-203 contribute to the ATP site; these read SSGHGQ and EGFI. The ATP-grasp domain maps to 119–308; sequence RLAAEELGLK…QFALHARAIL (190 aa). Residues Glu-267 and Glu-279 each contribute to the Mg(2+) site. N(1)-(5-phospho-beta-D-ribosyl)glycinamide-binding positions include Asp-286, Lys-356, and 363 to 364; that span reads RR.

The protein belongs to the PurK/PurT family. In terms of assembly, homodimer.

It catalyses the reaction N(1)-(5-phospho-beta-D-ribosyl)glycinamide + formate + ATP = N(2)-formyl-N(1)-(5-phospho-beta-D-ribosyl)glycinamide + ADP + phosphate + H(+). It participates in purine metabolism; IMP biosynthesis via de novo pathway; N(2)-formyl-N(1)-(5-phospho-D-ribosyl)glycinamide from N(1)-(5-phospho-D-ribosyl)glycinamide (formate route): step 1/1. Its function is as follows. Involved in the de novo purine biosynthesis. Catalyzes the transfer of formate to 5-phospho-ribosyl-glycinamide (GAR), producing 5-phospho-ribosyl-N-formylglycinamide (FGAR). Formate is provided by PurU via hydrolysis of 10-formyl-tetrahydrofolate. This is Formate-dependent phosphoribosylglycinamide formyltransferase from Actinobacillus pleuropneumoniae serotype 3 (strain JL03).